Reading from the N-terminus, the 526-residue chain is Tyrosine-protein kinase transforming protein Src (526 aa).

Positions 1 to 57 are disordered; the sequence is MGSSKSKPKDPSQRRCSLEPPDSTHHGGFPASQTPNKTAAPDTHRTPSRSFGTVATE. The N-myristoyl glycine; by host moiety is linked to residue Gly2. Residues 7-25 show a composition bias toward basic and acidic residues; it reads KPKDPSQRRCSLEPPDSTH. The SH3 domain maps to 81-142; that stretch reads GGVTTFVALY…PSNYVAPSDS (62 aa). One can recognise an SH2 domain in the interval 148-245; the sequence is WYFGKITRRE…GLCHRLTNVC (98 aa). The Protein kinase domain maps to 267–517; the sequence is LRLEVKLGQG…TFEYLQAQLL (251 aa). ATP is bound by residues 273 to 281 and Lys295; that span reads LGQGCFGEV. Catalysis depends on Asp386, which acts as the Proton acceptor. Tyr416 carries the phosphotyrosine; by autocatalysis modification.

Belongs to the protein kinase superfamily. Tyr protein kinase family. SRC subfamily. In terms of processing, the phosphorylated form is termed pp60v-src.

It carries out the reaction L-tyrosyl-[protein] + ATP = O-phospho-L-tyrosyl-[protein] + ADP + H(+). Functionally, this phosphoprotein, required for both the initiation and the maintenance of neoplastic transformation, is a protein kinase that catalyzes the phosphorylation of tyrosine residues in vitro. This Galliformes protein is Tyrosine-protein kinase transforming protein Src (V-SRC).